Consider the following 154-residue polypeptide: Large ribosomal subunit protein uL30 (154 aa).

Belongs to the universal ribosomal protein uL30 family. Part of the 50S ribosomal subunit.

The sequence is that of Large ribosomal subunit protein uL30 from Methanoregula boonei (strain DSM 21154 / JCM 14090 / 6A8).